The following is a 108-amino-acid chain: Glutaredoxin-1 (108 aa).

Positions 3-106 (EEFVQQRLAN…DILSSIGVLR (104 aa)) constitute a Glutaredoxin domain. Residues Cys23 and Cys26 are joined by a disulfide bond.

The protein belongs to the glutaredoxin family.

The protein resides in the virion. Has thioltransferase and dehydroascorbate reductase activities. The polypeptide is Glutaredoxin-1 (OPG075) (Cowpox virus (strain GRI-90 / Grishak) (CPV)).